The sequence spans 74 residues: Insertion element IS986 uncharacterized 8.2 kDa protein (74 aa).

The polypeptide is Insertion element IS986 uncharacterized 8.2 kDa protein (Mycobacterium tuberculosis).